Consider the following 363-residue polypeptide: Chorismate synthase (363 aa).

NADP(+) contacts are provided by Arg48 and Arg54. FMN is bound by residues 125–127 (RSS), 237–238 (NA), Gly277, 292–296 (KPTSS), and Arg318.

Belongs to the chorismate synthase family. In terms of assembly, homotetramer. It depends on FMNH2 as a cofactor.

It carries out the reaction 5-O-(1-carboxyvinyl)-3-phosphoshikimate = chorismate + phosphate. Its pathway is metabolic intermediate biosynthesis; chorismate biosynthesis; chorismate from D-erythrose 4-phosphate and phosphoenolpyruvate: step 7/7. Catalyzes the anti-1,4-elimination of the C-3 phosphate and the C-6 proR hydrogen from 5-enolpyruvylshikimate-3-phosphate (EPSP) to yield chorismate, which is the branch point compound that serves as the starting substrate for the three terminal pathways of aromatic amino acid biosynthesis. This reaction introduces a second double bond into the aromatic ring system. The sequence is that of Chorismate synthase from Pseudomonas savastanoi pv. phaseolicola (strain 1448A / Race 6) (Pseudomonas syringae pv. phaseolicola (strain 1448A / Race 6)).